We begin with the raw amino-acid sequence, 685 residues long: MKVFCGRVNPTTGAMDWVEEDEHYDYHQEIARSSYADMLHDKDRNEKYYQGICAAVRRVKQRGQEAVVLDIGTGTGLLSMMAVTAGADCCYAIEVFKPMSDAAVQIVKANGFSDKIKVINKHSTEVTVGPDGDMKTKANILITELFDTELIGEGALPSYEHAQHNLMQETWEAVPHRATVFAQLVESTRLWSWNKLFPLNLETGDIKPHPELETCPGAPSVCDIQLSQLNPRDFKILSEVLCVFRVDFSCQVSSAPTSHPVHFTSLASGAAQVVLSWWEIDMDPDGSITCTMQPSWMYETQQSVPWRDHWMQCVYFLPKECSVTQGEVCCLTAHQDDYCVWYSLNKSSAENDPVCRERPTCHCGAHITWNRARFGELNDRHRTQQYFEALKKVVTPSSTCLCVSDGSLLPVLAHSLGAKQIYTLESSSIAQHLMKKLFQVNHLGEKIQVLHKSADSLITADFEDRKISTLIGEPFFTTNLLPWHNLYFWYSRTALSTNLAKDCTVLPLSASLHVVAVEFKDLWRIRSPCGMCEGFDVSIMDKMIKNSLNFRESQEAEPHPLWEYPCRALSEPIQVMTFNFTEPVPTEEIRASGSLNLVRSGQCHGAVLWMVYELTKEITVSTGLIGISEEMGECQWYPHRKQGVYFFSSILNPQTIPAQSPSSVSYSVTFIPKEGDIRMCFEPDF.

SAM-dependent MTase PRMT-type domains lie at 14–341 (AMDW…YCVW) and 353–680 (PVCR…IRMC). Residues Glu-144 and Glu-153 contribute to the active site.

This sequence belongs to the class I-like SAM-binding methyltransferase superfamily. Protein arginine N-methyltransferase family. PRMT7 subfamily.

The protein resides in the cytoplasm. Its subcellular location is the cytosol. It is found in the nucleus. It catalyses the reaction L-arginyl-[protein] + S-adenosyl-L-methionine = N(omega)-methyl-L-arginyl-[protein] + S-adenosyl-L-homocysteine + H(+). Functionally, arginine methyltransferase that can both catalyze the formation of omega-N monomethylarginine (MMA) and symmetrical dimethylarginine (sDMA), with a preference for the formation of MMA. Specifically mediates the symmetrical dimethylation of arginine residues in the small nuclear ribonucleoproteins Sm D1 (SNRPD1) and Sm D3 (SNRPD3); such methylation being required for the assembly and biogenesis of snRNP core particles. Specifically mediates the symmetric dimethylation of histone H4 'Arg-3' to form H4R3me2s. Plays a role in gene imprinting by being recruited by CTCFL at the H19 imprinted control region (ICR) and methylating histone H4 to form H4R3me2s, possibly leading to recruit DNA methyltransferases at these sites. May also play a role in embryonic stem cell (ESC) pluripotency. Also able to mediate the arginine methylation of histone H2A and myelin basic protein (MBP) in vitro; the relevance of such results is however unclear in vivo. The chain is Protein arginine N-methyltransferase 7 (prmt7) from Xenopus laevis (African clawed frog).